A 169-amino-acid chain; its full sequence is Thiol peroxidase (169 aa).

The Thioredoxin domain occupies 19 to 167 (LKVGDRAPEA…YDEVVNKVKE (149 aa)). Cys-61 functions as the Cysteine sulfenic acid (-SOH) intermediate in the catalytic mechanism. Cys-61 and Cys-95 are disulfide-bonded.

It belongs to the peroxiredoxin family. Tpx subfamily. In terms of assembly, homodimer.

It catalyses the reaction a hydroperoxide + [thioredoxin]-dithiol = an alcohol + [thioredoxin]-disulfide + H2O. Thiol-specific peroxidase that catalyzes the reduction of hydrogen peroxide and organic hydroperoxides to water and alcohols, respectively. Plays a role in cell protection against oxidative stress by detoxifying peroxides. In Aquifex aeolicus (strain VF5), this protein is Thiol peroxidase.